The following is a 198-amino-acid chain: Recombination protein RecR (198 aa).

The C4-type zinc finger occupies 57 to 72; that stretch reads CTICGHITDTDPCYIC. Residues 80 to 175 enclose the Toprim domain; that stretch reads TTICVVQDPK…KVTRIAHGLP (96 aa).

Belongs to the RecR family.

In terms of biological role, may play a role in DNA repair. It seems to be involved in an RecBC-independent recombinational process of DNA repair. It may act with RecF and RecO. The protein is Recombination protein RecR of Geobacillus kaustophilus (strain HTA426).